The following is a 267-amino-acid chain: Non-homologous end joining protein Ku (267 aa).

In terms of domain architecture, Ku spans 10-190; sequence ISFGLVSFPV…TKYTAKELEL (181 aa).

It belongs to the prokaryotic Ku family. As to quaternary structure, homodimer. Interacts with LigD.

With LigD forms a non-homologous end joining (NHEJ) DNA repair enzyme, which repairs dsDNA breaks with reduced fidelity. Binds linear dsDNA with 5'- and 3'- overhangs but not closed circular dsDNA nor ssDNA. Recruits and stimulates the ligase activity of LigD. The chain is Non-homologous end joining protein Ku from Solibacter usitatus (strain Ellin6076).